We begin with the raw amino-acid sequence, 717 residues long: Fatty acid oxidation complex subunit alpha (717 aa).

The interval 1–189 is enoyl-CoA hydratase/isomerase; that stretch reads MIYQSPTIEV…KVGAIDAVVA (189 aa). Residue Asp-296 participates in substrate binding. A 3-hydroxyacyl-CoA dehydrogenase region spans residues 311–717; that stretch reads KKVNSAAVLG…ANNGSYYQQA (407 aa). NAD(+)-binding positions include Met-324, Asp-343, 400-402, Lys-407, and Ser-429; that span reads VVE. The active-site For 3-hydroxyacyl-CoA dehydrogenase activity is the His-450. Asn-453 contributes to the NAD(+) binding site. 2 residues coordinate substrate: Asn-500 and Tyr-660.

It in the N-terminal section; belongs to the enoyl-CoA hydratase/isomerase family. In the C-terminal section; belongs to the 3-hydroxyacyl-CoA dehydrogenase family. In terms of assembly, heterotetramer of two alpha chains (FadB) and two beta chains (FadA).

It catalyses the reaction a (3S)-3-hydroxyacyl-CoA + NAD(+) = a 3-oxoacyl-CoA + NADH + H(+). The enzyme catalyses a (3S)-3-hydroxyacyl-CoA = a (2E)-enoyl-CoA + H2O. The catalysed reaction is a 4-saturated-(3S)-3-hydroxyacyl-CoA = a (3E)-enoyl-CoA + H2O. It carries out the reaction (3S)-3-hydroxybutanoyl-CoA = (3R)-3-hydroxybutanoyl-CoA. It catalyses the reaction a (3Z)-enoyl-CoA = a 4-saturated (2E)-enoyl-CoA. The enzyme catalyses a (3E)-enoyl-CoA = a 4-saturated (2E)-enoyl-CoA. It participates in lipid metabolism; fatty acid beta-oxidation. Its function is as follows. Involved in the aerobic and anaerobic degradation of long-chain fatty acids via beta-oxidation cycle. Catalyzes the formation of 3-oxoacyl-CoA from enoyl-CoA via L-3-hydroxyacyl-CoA. It can also use D-3-hydroxyacyl-CoA and cis-3-enoyl-CoA as substrate. The chain is Fatty acid oxidation complex subunit alpha from Shewanella pealeana (strain ATCC 700345 / ANG-SQ1).